The chain runs to 361 residues: Tetraacyldisaccharide 4'-kinase (361 aa).

49–56 is an ATP binding site; that stretch reads TTGGTGKT.

Belongs to the LpxK family.

The enzyme catalyses a lipid A disaccharide + ATP = a lipid IVA + ADP + H(+). It functions in the pathway glycolipid biosynthesis; lipid IV(A) biosynthesis; lipid IV(A) from (3R)-3-hydroxytetradecanoyl-[acyl-carrier-protein] and UDP-N-acetyl-alpha-D-glucosamine: step 6/6. Transfers the gamma-phosphate of ATP to the 4'-position of a tetraacyldisaccharide 1-phosphate intermediate (termed DS-1-P) to form tetraacyldisaccharide 1,4'-bis-phosphate (lipid IVA). This Chlorobaculum parvum (strain DSM 263 / NCIMB 8327) (Chlorobium vibrioforme subsp. thiosulfatophilum) protein is Tetraacyldisaccharide 4'-kinase.